The chain runs to 3072 residues: Eukaryotic translation initiation factor 2-alpha kinase PK4 (3072 aa).

Topologically, residues 1–106 are cytoplasmic; that stretch reads MCNFIKKGIR…EFRWLINKLE (106 aa). The chain crosses the membrane as a helical span at residues 107-127; the sequence is IIYFYFFCHLLLLCIFQNIFL. Residues 128 to 1643 lie on the Lumenal side of the membrane; sequence LTYMSKEYFL…FTSIRYKRRR (1516 aa). The segment at 383-402 is disordered; the sequence is KEKCHRDEKCDRGENYDRGE. Positions 576–610 are 10 X 7 AA tandem repeat of D-K-N-[GE]-L-D-[GD]; sequence KKKILDENDMITIDNNIDKKENILFPYFHMEILKD. Residues 970–1010 are disordered; that stretch reads QYEDNNDNDNNKNDNNKNDNNKNDNNKNDNNNNNNNNNNNS. A compositionally biased stretch (basic and acidic residues) spans 978-996; sequence DNNKNDNNKNDNNKNDNNK. The span at 997-1009 shows a compositional bias: low complexity; that stretch reads NDNNNNNNNNNNN. Residues 1644–1664 traverse the membrane as a helical segment; it reads WYWRVFYTIMFIIFFPVLFIY. Over 1665 to 3072 the chain is Cytoplasmic; sequence RRIIKRRKGS…IKNENNGADK (1408 aa). Disordered regions lie at residues 1737–1766 and 1917–1937; these read KNYN…SKSN and KVGS…KDKK. The segment covering 1738–1766 has biased composition (low complexity); sequence NYNNNNNNNNNKNNNNISNNNSNSNSKSN. Residues 1928-1937 are compositionally biased toward basic and acidic residues; it reads NYTDNEKDKK. ATP-binding positions include 2152–2160 and K2177; that span reads IGQGGFGSV. Disordered stretches follow at residues 2316–2402, 2479–2558, and 2691–2749; these read FYSD…EGRD, RNED…KKLD, and ENDD…DDDI. The segment covering 2326 to 2335 has biased composition (basic and acidic residues); it reads KNKENPEKNH. The segment covering 2362 to 2384 has biased composition (basic residues); the sequence is HKLKKRKNKKKKSKKKRKSKSKI. 10 repeat units span residues 2483–2489, 2490–2496, 2497–2503, 2504–2510, 2511–2517, 2518–2524, 2525–2531, 2532–2538, 2539–2545, and 2546–2552. The 372-residue stretch at 2627 to 2998 folds into the Protein kinase domain; sequence TNVESINTNG…KIKVLLDPHL (372 aa). A compositionally biased stretch (acidic residues) spans 2692-2702; the sequence is NDDDDDDDDDN. The Proton acceptor role is filled by D2835. A Phosphothreonine modification is found at T2902.

The protein belongs to the protein kinase superfamily. Ser/Thr protein kinase family. GCN2 subfamily. In terms of assembly, may form oligomers in response to stress; oligomerization may result in catalytic activity. Interacts with BIP; the interaction is disrupted in response to stress. Post-translationally, auto-phosphorylated.

The protein localises to the endoplasmic reticulum membrane. The enzyme catalyses L-seryl-[protein] + ATP = O-phospho-L-seryl-[protein] + ADP + H(+). It catalyses the reaction L-threonyl-[protein] + ATP = O-phospho-L-threonyl-[protein] + ADP + H(+). Dissociation from BIP and oligomerization, may results autophosphorylation and kinase activity induction. Its function is as follows. During the asexual blood stage, phosphorylates translation factor eIF2alpha in late schizonts resulting in protein translation inhibition. Plays a role in trophozoite differentiation into schizonts. The chain is Eukaryotic translation initiation factor 2-alpha kinase PK4 from Plasmodium falciparum (isolate 3D7).